Reading from the N-terminus, the 487-residue chain is GTPase Der (487 aa).

Positions L2 to E166 constitute an EngA-type G 1 domain. GTP contacts are provided by residues G8–S15, D55–V59, and N118–D121. The tract at residues P165 to T194 is disordered. Residues R168–E187 are compositionally biased toward acidic residues. In terms of domain architecture, EngA-type G 2 spans L225–S398. Residues G231 to S238, D278 to L282, and N343 to D346 each bind GTP. One can recognise a KH-like domain in the interval N399 to P483.

This sequence belongs to the TRAFAC class TrmE-Era-EngA-EngB-Septin-like GTPase superfamily. EngA (Der) GTPase family. As to quaternary structure, associates with the 50S ribosomal subunit.

Functionally, GTPase that plays an essential role in the late steps of ribosome biogenesis. The polypeptide is GTPase Der (Chlamydia pneumoniae (Chlamydophila pneumoniae)).